We begin with the raw amino-acid sequence, 304 residues long: MTASDFQHQTVLLREAVDLLRPADGRVIIDGTLGGGGHSEALLASGATVVGVDRDPVALAAATARLGANPRFQGRAGNFAELPRVAADLLPVDGVLVDLGVSSPQLDVAERGFSFSKDGPLDMRMGPDGPTAAELIATTDERELVRILKDYGEEPFARPIARELKKALPTRTLEAAEVVKRAVPRKAWPNRIHVATRTFQALRMAVNGELEALDALLAAIPGLLKVGGRAAVIAFHSLEDRKVKEAFRALAGRCTCPPGLPVCVCSGVGDFALVTKKAVAASEAEVEANPRSRSAHLRVVEKLR.

S-adenosyl-L-methionine-binding positions include 36–38, Asp53, Phe79, Asp98, and Gln105; that span reads GGH.

Belongs to the methyltransferase superfamily. RsmH family.

It localises to the cytoplasm. It catalyses the reaction cytidine(1402) in 16S rRNA + S-adenosyl-L-methionine = N(4)-methylcytidine(1402) in 16S rRNA + S-adenosyl-L-homocysteine + H(+). Its function is as follows. Specifically methylates the N4 position of cytidine in position 1402 (C1402) of 16S rRNA. The polypeptide is Ribosomal RNA small subunit methyltransferase H (Myxococcus xanthus (strain DK1622)).